A 307-amino-acid polypeptide reads, in one-letter code: MKLTLNRILFSGLALSILFTLTGCVGRDAHGNPKGMIWEFLGKPMSYFIDYFANNAGLGYGLAIIIVTIIVRTLILPLGLYQSWKASYQSEKMTFLKPVFEPINKRIKQASSQEEKMAAQTELMAAQRAHGINPLGGIGCLPLLIQMPFFSAMYFAAQYTKGVSTSTFMGIDLGSRSLVLTAIIAALYFFQSWLSMMAVSEEQREQMKTMMYTMPIMMIFMSFSLPAGVGLYWLVGGFFSIIQQLITTYLLKPRLHKQIKEEYAKTPPKAYQSTSSRKDVTPSQNMEQANLPKKIKSNRNAGKQRKR.

The first 23 residues, 1–23 (MKLTLNRILFSGLALSILFTLTG), serve as a signal peptide directing secretion. Residue Cys24 is the site of N-palmitoyl cysteine attachment. The S-diacylglycerol cysteine moiety is linked to residue Cys24. 5 consecutive transmembrane segments (helical) span residues 58 to 78 (LGYGLAIIIVTIIVRTLILPL), 135 to 155 (LGGIGCLPLLIQMPFFSAMYF), 179 to 199 (VLTAIIAALYFFQSWLSMMAV), 209 to 225 (TMMYTMPIMMIFMSFSL), and 231 to 251 (LYWLVGGFFSIIQQLITTYLL). The segment at 263–307 (YAKTPPKAYQSTSSRKDVTPSQNMEQANLPKKIKSNRNAGKQRKR) is disordered. Positions 271–288 (YQSTSSRKDVTPSQNMEQ) are enriched in polar residues. Over residues 293–307 (KKIKSNRNAGKQRKR) the composition is skewed to basic residues.

It belongs to the OXA1/ALB3/YidC family. Type 2 subfamily.

It is found in the cell membrane. Functionally, required for the insertion and/or proper folding and/or complex formation of integral membrane proteins into the membrane. Involved in integration of membrane proteins that insert both dependently and independently of the Sec translocase complex, as well as at least some lipoproteins. The sequence is that of Membrane protein insertase YidC 2 from Streptococcus pyogenes serotype M18 (strain MGAS8232).